An 89-amino-acid polypeptide reads, in one-letter code: Small ribosomal subunit protein uS14 (89 aa).

The protein belongs to the universal ribosomal protein uS14 family. Part of the 30S ribosomal subunit. Contacts proteins S3 and S10.

Binds 16S rRNA, required for the assembly of 30S particles and may also be responsible for determining the conformation of the 16S rRNA at the A site. The sequence is that of Small ribosomal subunit protein uS14 from Oenococcus oeni (strain ATCC BAA-331 / PSU-1).